Reading from the N-terminus, the 357-residue chain is Geranylgeranyl pyrophosphate synthase spyE (357 aa).

The tract at residues 36–60 (EAQSQAVPGTRTETEPTGSSPSDLQ) is disordered. A compositionally biased stretch (polar residues) spans 50 to 59 (EPTGSSPSDL). Isopentenyl diphosphate is bound by residues Lys-84, Arg-87, and His-116. The Mg(2+) site is built by Asp-123 and Asp-127. Arg-132 provides a ligand contact to dimethylallyl diphosphate. Residue Arg-133 participates in isopentenyl diphosphate binding. Residues Lys-210, Thr-211, and Gln-244 each contribute to the dimethylallyl diphosphate site. Asp-247 lines the Mg(2+) pocket. Asn-251, Lys-261, and Lys-271 together coordinate dimethylallyl diphosphate.

This sequence belongs to the FPP/GGPP synthase family. Mg(2+) is required as a cofactor.

The enzyme catalyses isopentenyl diphosphate + dimethylallyl diphosphate = (2E)-geranyl diphosphate + diphosphate. It carries out the reaction isopentenyl diphosphate + (2E)-geranyl diphosphate = (2E,6E)-farnesyl diphosphate + diphosphate. It catalyses the reaction isopentenyl diphosphate + (2E,6E)-farnesyl diphosphate = (2E,6E,10E)-geranylgeranyl diphosphate + diphosphate. It participates in secondary metabolite biosynthesis; terpenoid biosynthesis. Functionally, geranylgeranyl pyrophosphate synthase; part of the gene cluster that mediates the biosynthesis of meroterpenoids called sartorypyrones. Within the pathway, spyE provides the spyF cosubstrate geranylgeranyl pyrophosphate (GGPP) for the prenylation of triacetic acid lactone (TAL). The biosynthesis of sartorypyrones begins with the production of triacetic acid lactone (TAL) by the NR-PKS spyA using one molecule of acetyl-CoA and two molecules of malonyl-CoA. The prenyltransferase spyF then conjugates geranylgeranyl pyrophosphate (GGPP) to TAL to form geranylgeranyl-triacetate lactone, for which the pathway-specific geranylgeranyl pyrophosphate synthase (GGPS) spyE is required to provide GGPP. Subsequently, geranylgeranyl-triacetate lactone is epoxidized at the terminal olein by the FAD-dependent monooxygenase spyC, followed by cyclization of the terpenoid component catalyzed by the terpene cyclase spyD to produce both the bicyclic sartorypyrone F and the monocyclic sartorypyrone D. Finally, the last step of the biosynthesis involves the acetylation of the meroterpenoids sartorypyrones D and F by the acetyltransferase SpyB to produce sartorypyrones A and G, respectively. The chain is Geranylgeranyl pyrophosphate synthase spyE from Aspergillus fumigatus (strain ATCC MYA-4609 / CBS 101355 / FGSC A1100 / Af293) (Neosartorya fumigata).